The sequence spans 513 residues: Cytochrome P450 monooxygenase sthF (513 aa).

Helical transmembrane passes span 13-33 (FPSL…YIFI) and 212-232 (MLHP…IILL). Residue Cys452 coordinates heme.

The protein belongs to the cytochrome P450 family. The cofactor is heme.

The protein localises to the membrane. The catalysed reaction is dehydroprobetaenone I + NADPH + O2 + H(+) = epoxybetaenone + NADP(+) + H2O. The enzyme catalyses dehydroprobetaenone I + 3 NADPH + 3 O2 + 3 H(+) = betaenone C + 3 NADP(+) + 3 H2O. It catalyses the reaction probetaenone I + 3 NADPH + 3 O2 + 3 H(+) = betaenone B + 3 NADP(+) + 3 H2O. Its pathway is mycotoxin biosynthesis. Functionally, cytochrome P450 monooxygenase; part of the gene cluster that mediates the biosynthesis of the phytotoxin stemphyloxin II. The first step of the pathway is the synthesis of dehydroprobetaenone I by the polyketide synthase sthA and the enoyl reductase sthE via condensation of one acetyl-CoA starter unit with 7 malonyl-CoA units and 5 methylations. The C-terminal reductase (R) domain of sthA catalyzes the reductive release of the polyketide chain. Because sthA lacks a designated enoylreductase (ER) domain, the required activity is provided the enoyl reductase sthE. The short-chain dehydrogenase/reductase sthC then catalyzes reduction of dehydroprobetaenone I to probetaenone I. The cytochrome P450 monooxygenase sthF catalyzes successive epoxidation, oxidation (resulting from epoxide opening) and hydroxylation to install a tertiary alcohol in the decaline ring to yield betaenone C from dehydroprobetaenone I and betaenone B from probetaenone I. The FAD-linked oxidoreductase sthB is responsible for the conversion of betaenone C to betaenone A via an intramolecular aldol reaction between C-1 and C-17 to form the bridged tricyclic system in betaenone A. Finally, the cytochrome P450 monooxygenase sthD catalyzes the hydroxylation of C-15 to afford the final metabolite stemphyloxin II. In Phaeosphaeria nodorum (strain SN15 / ATCC MYA-4574 / FGSC 10173) (Glume blotch fungus), this protein is Cytochrome P450 monooxygenase sthF.